The chain runs to 203 residues: Probable flagellin 1 (203 aa).

Residues 1 to 6 constitute a propeptide that is removed on maturation; sequence MRRRRG.

The protein belongs to the archaeal flagellin family.

It is found in the archaeal flagellum. Flagellin is the subunit protein which polymerizes to form the filaments of archaeal flagella. The sequence is that of Probable flagellin 1 (flaB1) from Aeropyrum pernix (strain ATCC 700893 / DSM 11879 / JCM 9820 / NBRC 100138 / K1).